The following is a 295-amino-acid chain: Putative 23S rRNA (guanine-N(1)-)-methyltransferase (295 aa).

Zn(2+)-binding residues include cysteine 11, cysteine 14, cysteine 31, and histidine 35. S-adenosyl-L-methionine is bound by residues tyrosine 74, threonine 116 to glycine 117, and histidine 204.

Belongs to the methyltransferase superfamily. RlmA family.

Functionally, confers strong resistance to mycinamicin (MM) and tylosin (TY). May function as methyltransferase. In Micromonospora griseorubida, this protein is Putative 23S rRNA (guanine-N(1)-)-methyltransferase (myrA).